A 274-amino-acid chain; its full sequence is Large ribosomal subunit protein uL2 (274 aa).

The tract at residues 224 to 274 (VMNPVDHPHGGGEGRSPIGRNPVTPWGKPALGARTRKKKPGDRLIVKRRAR) is disordered. Positions 257–274 (RTRKKKPGDRLIVKRRAR) are enriched in basic residues.

This sequence belongs to the universal ribosomal protein uL2 family. As to quaternary structure, part of the 50S ribosomal subunit. Forms a bridge to the 30S subunit in the 70S ribosome.

One of the primary rRNA binding proteins. Required for association of the 30S and 50S subunits to form the 70S ribosome, for tRNA binding and peptide bond formation. It has been suggested to have peptidyltransferase activity; this is somewhat controversial. Makes several contacts with the 16S rRNA in the 70S ribosome. This chain is Large ribosomal subunit protein uL2, found in Pelotomaculum thermopropionicum (strain DSM 13744 / JCM 10971 / SI).